A 262-amino-acid polypeptide reads, in one-letter code: Small ribosomal subunit protein uS2 (262 aa).

The segment at 240 to 262 (NLDEKEESQEAESTEENTTVESN) is disordered. Over residues 243–254 (EKEESQEAESTE) the composition is skewed to acidic residues.

Belongs to the universal ribosomal protein uS2 family.

In Staphylococcus haemolyticus (strain JCSC1435), this protein is Small ribosomal subunit protein uS2.